The sequence spans 498 residues: 3-octaprenyl-4-hydroxybenzoate carboxy-lyase (498 aa).

Asn-177 provides a ligand contact to Mn(2+). Residues 180-182 (IYR), 194-196 (RWL), and 199-200 (RG) each bind prenylated FMN. Glu-243 lines the Mn(2+) pocket. The active-site Proton donor is the Asp-292.

It belongs to the UbiD family. In terms of assembly, homohexamer. Prenylated FMN serves as cofactor. The cofactor is Mn(2+).

It is found in the cell membrane. It catalyses the reaction a 4-hydroxy-3-(all-trans-polyprenyl)benzoate + H(+) = a 2-(all-trans-polyprenyl)phenol + CO2. It functions in the pathway cofactor biosynthesis; ubiquinone biosynthesis. Functionally, catalyzes the decarboxylation of 3-octaprenyl-4-hydroxy benzoate to 2-octaprenylphenol, an intermediate step in ubiquinone biosynthesis. In Methylococcus capsulatus (strain ATCC 33009 / NCIMB 11132 / Bath), this protein is 3-octaprenyl-4-hydroxybenzoate carboxy-lyase.